The following is a 172-amino-acid chain: Adenine phosphoribosyltransferase (172 aa).

Belongs to the purine/pyrimidine phosphoribosyltransferase family. As to quaternary structure, homodimer.

The protein resides in the cytoplasm. The enzyme catalyses AMP + diphosphate = 5-phospho-alpha-D-ribose 1-diphosphate + adenine. The protein operates within purine metabolism; AMP biosynthesis via salvage pathway; AMP from adenine: step 1/1. Its function is as follows. Catalyzes a salvage reaction resulting in the formation of AMP, that is energically less costly than de novo synthesis. In Gloeothece citriformis (strain PCC 7424) (Cyanothece sp. (strain PCC 7424)), this protein is Adenine phosphoribosyltransferase.